The primary structure comprises 309 residues: uncharacterized protein (309 aa).

One can recognise an RPE1 insert domain in the interval 9–55 (NFLYNIANKDGFKGYKECRTSAYKNVFDDSSTKSTSKFHLGISDTKN). The helical transmembrane segment at 62-82 (IIGLILIIFAGVLFYAYILQH) threads the bilayer.

Belongs to the LicD transferase family.

It is found in the membrane. This is an uncharacterized protein from Rickettsia typhi (strain ATCC VR-144 / Wilmington).